We begin with the raw amino-acid sequence, 316 residues long: tRNA-dihydrouridine(16) synthase (316 aa).

Residues proline 7–glutamate 9 and glutamine 68 contribute to the FMN site. Cysteine 98 functions as the Proton donor in the catalytic mechanism. FMN-binding positions include lysine 139, asparagine 200–glutamate 202, and glycine 224–arginine 225.

This sequence belongs to the Dus family. DusC subfamily. The cofactor is FMN.

It catalyses the reaction 5,6-dihydrouridine(16) in tRNA + NADP(+) = uridine(16) in tRNA + NADPH + H(+). The enzyme catalyses 5,6-dihydrouridine(16) in tRNA + NAD(+) = uridine(16) in tRNA + NADH + H(+). Functionally, catalyzes the synthesis of 5,6-dihydrouridine (D), a modified base found in the D-loop of most tRNAs, via the reduction of the C5-C6 double bond in target uridines. Specifically modifies U16 in tRNAs. This chain is tRNA-dihydrouridine(16) synthase, found in Escherichia coli O157:H7.